A 529-amino-acid polypeptide reads, in one-letter code: Methionine--tRNA ligase (529 aa).

Positions 12-22 (YYVNALPHIGS) match the 'HIGH' region motif. Zn(2+)-binding residues include Cys-127, Cys-130, Cys-145, and His-148. Residues 301-305 (KMGKS) carry the 'KMSKS' region motif. Lys-304 lines the ATP pocket.

This sequence belongs to the class-I aminoacyl-tRNA synthetase family. MetG type 2A subfamily. As to quaternary structure, monomer. The cofactor is Zn(2+).

It localises to the cytoplasm. The enzyme catalyses tRNA(Met) + L-methionine + ATP = L-methionyl-tRNA(Met) + AMP + diphosphate. In terms of biological role, is required not only for elongation of protein synthesis but also for the initiation of all mRNA translation through initiator tRNA(fMet) aminoacylation. The protein is Methionine--tRNA ligase of Thermosynechococcus vestitus (strain NIES-2133 / IAM M-273 / BP-1).